The chain runs to 171 residues: Translation initiation factor IF-3 (171 aa).

This sequence belongs to the IF-3 family. Monomer.

Its subcellular location is the cytoplasm. Functionally, IF-3 binds to the 30S ribosomal subunit and shifts the equilibrium between 70S ribosomes and their 50S and 30S subunits in favor of the free subunits, thus enhancing the availability of 30S subunits on which protein synthesis initiation begins. The protein is Translation initiation factor IF-3 of Halalkalibacterium halodurans (strain ATCC BAA-125 / DSM 18197 / FERM 7344 / JCM 9153 / C-125) (Bacillus halodurans).